We begin with the raw amino-acid sequence, 1348 residues long: Adhesion G protein-coupled receptor F5 (1348 aa).

The signal sequence occupies residues 1–21; sequence MRSPRTFTFYFLLLVICSSEA. Topologically, residues 22–1019 are extracellular; that stretch reads ALSTPTEPIV…LKILLDIISY (998 aa). The 109-residue stretch at 163 to 271 folds into the SEA domain; the sequence is PEAFITLKLK…NSFQGTPSNE (109 aa). Ig-like domains are found at residues 268–366, 367–464, and 469–559; these read PSNE…LDVT, PIRI…IAVT, and ANLT…KDVT. 4 N-linked (GlcNAc...) asparagine glycosylation sites follow: Asn270, Asn286, Asn337, and Asn349. Cys291 and Cys348 are disulfide-bonded. A disulfide bridge connects residues Cys389 and Cys447. Asn470, Asn538, and Asn665 each carry an N-linked (GlcNAc...) asparagine glycan. Cysteines 490 and 543 form a disulfide. Residue Ser818 is modified to Phosphoserine. In terms of domain architecture, GAIN-B spans 841-1005; the sequence is TPPFLAHPNV…SILMSPDSPD (165 aa). Disulfide bonds link Cys953–Cys987 and Cys972–Cys989. The tract at residues 953–1005 is GPS; the sequence is CVFWNFSLANNTGGWDSSGCSVEDDGRDNRDRVFCKCNHLTSFSILMSPDSPD. The segment at 993–1008 is tethered agonist; it reads TSFSILMSPDSPDPGS. A helical transmembrane segment spans residues 1020-1040; that stretch reads IGLGFSIVSLAACLVVEAMVW. The Cytoplasmic segment spans residues 1041–1055; sequence KSVTKNRTSYMRHIC. Residues 1056–1076 traverse the membrane as a helical segment; sequence IVNIAFCLLIADIWFIVAGAI. Residues 1077–1092 are Extracellular-facing; that stretch reads HDGRYPLNETACVAAT. A helical membrane pass occupies residues 1093-1113; it reads FFIHFFYLSVFFWMLTLGLML. Over 1114–1130 the chain is Cytoplasmic; it reads FYRLIFILHDASKSTQK. The chain crosses the membrane as a helical span at residues 1131–1151; that stretch reads AIAFSLGYGCPLIISSITVGV. Residues 1152 to 1175 are Extracellular-facing; it reads TQPQEVYMRKNACWLNWEDTRALL. A helical membrane pass occupies residues 1176–1196; that stretch reads AFAIPALIIVVVNVSITVVVI. Residues 1197–1221 lie on the Cytoplasmic side of the membrane; it reads TKILRPSIGDKPGKQEKSSLFQISK. The helical transmembrane segment at 1222–1242 threads the bilayer; the sequence is SIGVLTPLLGLTWGFGLATVI. Residues 1243–1250 are Extracellular-facing; the sequence is QGSNAVFH. The chain crosses the membrane as a helical span at residues 1251-1271; sequence IIFTLLNAFQGLFILLFGCLW. Over 1272–1348 the chain is Cytoplasmic; sequence DQKVQEALLH…NSSSAYSLLN (77 aa). Thr1302 is subject to Phosphothreonine. Residue Ser1309 is modified to Phosphoserine. Positions 1328 to 1348 are disordered; it reads STPETTSSSLENSSSAYSLLN.

It belongs to the G-protein coupled receptor 2 family. Adhesion G-protein coupled receptor (ADGR) subfamily. As to quaternary structure, homodimer; disulfide-linked. Heterodimer of 2 chains generated by proteolytic processing; the large extracellular N-terminal fragment and the membrane-bound C-terminal fragment predominantly remain associated and non-covalently linked. Fragment generates by the processing enzyme furin remains attached to the extracellular N-terminal fragment. Interacts (via N-terminal extracellular domain) with SFTPD. Highly glycosylated. Post-translationally, proteolytically cleaved at multiple sites: one in the GPS region of the GAIN-B domain (S1 site) and the other in the SEA domain (S2 site). The proteolytic cleavage at S1 site generates an extracellular subunit and a seven-transmembrane subunit. The proteolytic cleavage at S2 site generates a fragment that undergoes proteolytic cleavage by the processing enzyme furin. Widely expressed, with highest levels in lung, pancreas, kidney and heart. In the kidney, expressed more abundantly in the medulla than in the cortex, predominantly expressed in A-intercalated cells (at protein level). Expressed in endothelial cells from various tissues, including brain, heart, kidney, liver, lung and muscle. In the lung, expressed in alveolar type II (ATII) cells (at protein level). Expressed in pancreatic islets of Langerhans, predominantly in delta cells, as well as in endothelial cells. Expressed in white adipose tissue.

It is found in the cell membrane. As an adhesion G protein-coupled receptor (aGPCR) exhibits a large N-terminal extracellular domain containing highly conserved GPCR autoproteolysis-inducing (GAIN) domain. During synthesis, intracellular autoproteolytic processing of nascent chain within the GAIN domain generates a mature protein, consisting of an N-terminal fragment that is non-covalently linked to the C-terminal fragment. The mature protein is routed to the plasma membrane where the N- and C-terminal fragments remain associated, forming the holoreceptor. Dissociation of the aGPCR fragments stimulates G protein signaling through the action of the tethered-peptide agonist stalk that is occluded within the GAIN domain in the holoreceptor form. This dissociation might be induced by ligand binding, such as that of sFNDC4. Adhesion G protein-coupled receptor. In alveolar type II (ATII or AT2) cells, required for normal lung surfactant homeostasis. Modulation of both surfactant secretion and uptake by ATII cells is mediated by the downstream activation of GNAQ/GNA11 proteins and may be a consequence of increased cortical F-actin assembly induced by ADGRF5 activation. In the kidney, may play a role in the regulation of acid excretion into the primary urine, possibly by regulating the surface expression of V-ATPase proton pump. As a receptor for soluble FNDC4 (sFNDC4), required for proper systemic glucose tolerance, specifically sensitizing white adipose tissue to insulin. Also plays a role in sFNDC4-induced decrease of local inflammation in white adipose tissue. The polypeptide is Adhesion G protein-coupled receptor F5 (Adgrf5) (Mus musculus (Mouse)).